A 329-amino-acid chain; its full sequence is Malate dehydrogenase (329 aa).

12–18 (GAAGQIG) provides a ligand contact to NAD(+). Positions 95 and 101 each coordinate substrate. NAD(+) contacts are provided by residues asparagine 108, glutamine 115, and 132 to 134 (VGN). Positions 134 and 165 each coordinate substrate. The Proton acceptor role is filled by histidine 190.

Belongs to the LDH/MDH superfamily. MDH type 2 family.

The enzyme catalyses (S)-malate + NAD(+) = oxaloacetate + NADH + H(+). Catalyzes the reversible oxidation of malate to oxaloacetate. This Bordetella bronchiseptica (strain ATCC BAA-588 / NCTC 13252 / RB50) (Alcaligenes bronchisepticus) protein is Malate dehydrogenase.